We begin with the raw amino-acid sequence, 284 residues long: Bifunctional protein FolD (284 aa).

Residues 166–168 (GAS), Ser191, and Ile232 contribute to the NADP(+) site.

This sequence belongs to the tetrahydrofolate dehydrogenase/cyclohydrolase family. As to quaternary structure, homodimer.

The enzyme catalyses (6R)-5,10-methylene-5,6,7,8-tetrahydrofolate + NADP(+) = (6R)-5,10-methenyltetrahydrofolate + NADPH. It catalyses the reaction (6R)-5,10-methenyltetrahydrofolate + H2O = (6R)-10-formyltetrahydrofolate + H(+). It participates in one-carbon metabolism; tetrahydrofolate interconversion. Its function is as follows. Catalyzes the oxidation of 5,10-methylenetetrahydrofolate to 5,10-methenyltetrahydrofolate and then the hydrolysis of 5,10-methenyltetrahydrofolate to 10-formyltetrahydrofolate. The chain is Bifunctional protein FolD from Thiobacillus denitrificans (strain ATCC 25259 / T1).